The primary structure comprises 716 residues: tRNA(Met) cytidine acetyltransferase TmcA (716 aa).

Residues Gln192, 217–226 (GRGKSYVIGL), and Arg364 each bind ATP. The N-acetyltransferase domain maps to 401–567 (REVLARDREV…KNVALAKPLD (167 aa)). Acetyl-CoA contacts are provided by residues 493 to 495 (IAV) and 500 to 506 (QRRGLGS).

This sequence belongs to the RNA cytidine acetyltransferase family. TmcA subfamily.

The protein localises to the cytoplasm. It catalyses the reaction cytidine(34) in elongator tRNA(Met) + acetyl-CoA + ATP + H2O = N(4)-acetylcytidine(34) in elongator tRNA(Met) + ADP + phosphate + CoA + H(+). In terms of biological role, catalyzes the formation of N(4)-acetylcytidine (ac(4)C) at the wobble position of tRNA(Met), by using acetyl-CoA as an acetyl donor and ATP (or GTP). This Aeropyrum pernix (strain ATCC 700893 / DSM 11879 / JCM 9820 / NBRC 100138 / K1) protein is tRNA(Met) cytidine acetyltransferase TmcA.